The following is a 393-amino-acid chain: Ubiquitin-like modifier-activating enzyme 5 (393 aa).

Residues glycine 75, aspartate 96, lysine 119, asparagine 142, and asparagine 175 each contribute to the ATP site. Zn(2+)-binding residues include cysteine 217 and cysteine 220. Cysteine 241 serves as the catalytic Glycyl thioester intermediate. Residues cysteine 294 and cysteine 299 each contribute to the Zn(2+) site.

This sequence belongs to the ubiquitin-activating E1 family. UBA5 subfamily.

E1-like enzyme which activates UFM1. The chain is Ubiquitin-like modifier-activating enzyme 5 from Bombyx mori (Silk moth).